Reading from the N-terminus, the 601-residue chain is MTALSLQQQLAESIYTALGTAFEAGQLGQLTQLPPRQSVVVEKPKVPEHGDYATPVAMSLAKPCRLAPLAIAEAIASYLASDEIGVEVAKPGFINLRLGHRFVAVELQNILELKGDYGRTVPQQPERILLEFVSANPTGPLHLGHGRWAALGSSLERILQFAGYTVDSEFYINDAGNQMQLLGLSLKQRYLQVLGEAVELPDGGYKGSYLKELAEQLVADKGDSLGGEPVEWFSAYAEGRLLEQQKITLQQFRTEFDRWYSERSLHCAGAIEAALADLEARGMLYRAARSRQEQSGEITGRSKKVQAPAAFEEEDGGGEALFFKAADFGDEMDRVVKRADGNTTYLAADIAYHWDKYQRGYGRLINIWGADHHGYVPRMKAVAQALGHPADSLEILIGQMVRLFKTNPETGQKEEMRMSKRRGELVSVDDLIEEVGVDAGRWFLLSQSLNTTVNFDLDLAQSEKFDNPVFYVQYNHARCCSILRKAPERGMPILERFEFLKPDGGLWLETPQERTLALRLLAAPDEYRFAAVDRTPQRLTQYAYDLASDVSQFYEHCPILPPLAENLEPALRYARLGLVVATRQVLATTLTLLGIEPRESM.

Residues 135–145 (ANPTGPLHLGH) carry the 'HIGH' region motif.

The protein belongs to the class-I aminoacyl-tRNA synthetase family. As to quaternary structure, monomer.

It is found in the cytoplasm. It catalyses the reaction tRNA(Arg) + L-arginine + ATP = L-arginyl-tRNA(Arg) + AMP + diphosphate. In Gloeobacter violaceus (strain ATCC 29082 / PCC 7421), this protein is Arginine--tRNA ligase.